Consider the following 221-residue polypeptide: Thiol:disulfide interchange protein TlpA (221 aa).

At 1–11 the chain is on the cytoplasmic side; sequence MLDTKPSATRR. The helical transmembrane segment at 12–35 threads the bilayer; that stretch reads IPLVIATVAVGGLAGFAALYGLGL. Topologically, residues 36–221 are periplasmic; sequence SRAPTGDPAC…AATGKAAAAL (186 aa). 2 cysteine pairs are disulfide-bonded: Cys-45-Cys-190 and Cys-107-Cys-110. Residues 69 to 215 form the Thioredoxin domain; sequence ASAPLKLPDL…ALKLIRAATG (147 aa).

It belongs to the thioredoxin family. Monomer.

It is found in the cell membrane. Involved in cytochrome aa3 assembly. This is Thiol:disulfide interchange protein TlpA (tlpA) from Bradyrhizobium diazoefficiens (strain JCM 10833 / BCRC 13528 / IAM 13628 / NBRC 14792 / USDA 110).